Reading from the N-terminus, the 137-residue chain is uncharacterized protein (137 aa).

It belongs to the ycf72 family.

The protein localises to the plastid. It is found in the chloroplast. This is an uncharacterized protein from Saccharum hybrid (Sugarcane).